The following is a 99-amino-acid chain: uncharacterized protein (99 aa).

It belongs to the ycf15 family.

It is found in the plastid. Its subcellular location is the chloroplast. This is an uncharacterized protein from Saccharum hybrid (Sugarcane).